Here is a 1613-residue protein sequence, read N- to C-terminus: Myosin-IIIa (1613 aa).

The Protein kinase domain maps to 21-287; sequence WEIIETIGKG…VSDLLKHKFI (267 aa). ATP contacts are provided by residues 27-35 and Lys50; that span reads IGKGTYGKV. Asp150 acts as the Proton acceptor in catalysis. One can recognise a Myosin motor domain in the interval 338–1052; that stretch reads KDVDDLATLD…HVEQLNLMRK (715 aa). The actin-binding stretch occupies residues 933–955; the sequence is LMDLLSKMVVGQPHFVRCIKPNN. IQ domains follow at residues 1054-1083 and 1081-1110; these read ATNK…KRKS and RKSS…MKNT. Disordered stretches follow at residues 1136–1168 and 1476–1506; these read VKKQ…TAPF and SGVS…EDST. Residues 1145-1161 show a composition bias toward low complexity; sequence PTNESNTSTPNNKESPS. The interval 1398–1476 is interaction with MORN4; it reads EGVHHSKMVD…RHVSTHQYLS (79 aa). Residues 1488 to 1497 are compositionally biased toward basic residues; sequence RPPRRPRKPK.

The protein in the C-terminal section; belongs to the TRAFAC class myosin-kinesin ATPase superfamily. Myosin family. It in the N-terminal section; belongs to the protein kinase superfamily. STE Ser/Thr protein kinase family. As to quaternary structure, interacts with MORN4. Interacts (via C-terminus) with ESPN and ESPNL. Expressed in the cochlear hair cells (at protein level). Expressed in utricle hair bundles (at protein level).

Its subcellular location is the cytoplasm. The protein localises to the cytoskeleton. It localises to the cell projection. The protein resides in the filopodium tip. It is found in the stereocilium. It carries out the reaction L-seryl-[protein] + ATP = O-phospho-L-seryl-[protein] + ADP + H(+). The catalysed reaction is L-threonyl-[protein] + ATP = O-phospho-L-threonyl-[protein] + ADP + H(+). It catalyses the reaction ATP + H2O = ADP + phosphate + H(+). In terms of biological role, actin-dependent motor protein with a protein kinase activity, playing an essential role in hearing. Probably plays also a role in vision. Required for normal cochlear hair bundle development and hearing. Plays an important role in the early steps of cochlear hair bundle morphogenesis. Influences the number and lengths of stereocilia to be produced and limits the growth of microvilli within the forming auditory hair bundles thereby contributing to the architecture of the hair bundle, including its staircase pattern. Involved in the elongation of actin in stereocilia tips by transporting the actin regulatory factor ESPN to the plus ends of actin filaments. The sequence is that of Myosin-IIIa (Myo3a) from Mus musculus (Mouse).